The chain runs to 299 residues: Phosphoribosylaminoimidazole-succinocarboxamide synthase (299 aa).

This sequence belongs to the SAICAR synthetase family.

It carries out the reaction 5-amino-1-(5-phospho-D-ribosyl)imidazole-4-carboxylate + L-aspartate + ATP = (2S)-2-[5-amino-1-(5-phospho-beta-D-ribosyl)imidazole-4-carboxamido]succinate + ADP + phosphate + 2 H(+). The protein operates within purine metabolism; IMP biosynthesis via de novo pathway; 5-amino-1-(5-phospho-D-ribosyl)imidazole-4-carboxamide from 5-amino-1-(5-phospho-D-ribosyl)imidazole-4-carboxylate: step 1/2. The chain is Phosphoribosylaminoimidazole-succinocarboxamide synthase (ade7) from Schizosaccharomyces pombe (strain 972 / ATCC 24843) (Fission yeast).